Here is a 124-residue protein sequence, read N- to C-terminus: Fluoride-specific ion channel FluC (124 aa).

4 helical membrane-spanning segments follow: residues 2-22 (LNIA…RWLI), 35-55 (TGTL…IAWF), 71-91 (TGFC…VALF), and 100-120 (LGTM…AFWL). Na(+) is bound by residues G75 and T78.

It belongs to the fluoride channel Fluc/FEX (TC 1.A.43) family.

The protein localises to the cell inner membrane. It carries out the reaction fluoride(in) = fluoride(out). With respect to regulation, na(+) is not transported, but it plays an essential structural role and its presence is essential for fluoride channel function. Fluoride-specific ion channel. Important for reducing fluoride concentration in the cell, thus reducing its toxicity. The protein is Fluoride-specific ion channel FluC of Proteus mirabilis (strain HI4320).